An 880-amino-acid chain; its full sequence is METNEQTMPTKYDPAAVEKDRYDFWLKGKFFEAGSDQTKEPYSVVIPPPNVTGRLHLGHAWDTTLQDIVTRMKRMQGYDVLWLPGMDHAGIATQAKVEAKLREEGKSRYDLGREKFLEETWKWKEEYADFIRSQWAKLGLGLDYSRERFTLDEGLSKAVREVFVKLYEKGLIYRGEYIINWDPATKTALSDIEVIYKDVQGAFYHMSYPLADGSGSIEIATTRPETMLGDTAVAVHPEDERYKHLIGKTVILPIVNREIPIVGDDYVDMEFGSGAVKITPAHDPNDFELGNRHNLERILVMNEDGTMNENALQYQGMDRFECRKKLVKDLQEAGVLFKIEDHMHSVGHSERSGAVVEPYLSTQWFVRMQPLADAAIELQKKEEKVNFVPDRFEKTYLHWMENIRDWCISRQLWWGHRIPAWYHKETGELYVGLEAPEDSENWEQDTDVLDTWFSSALWPFSTMGWPDVTAEDFKRYYPTDVLVTGYDIIFFWVSRMIFQGIEFTGERPFKDVLIHGLIRDEQGRKMSKSLGNGVDPMDVIDKYGADSLRYFLATGSSPGQDLRFSYEKVESTWNFANKIWNASRFALMNMDGMTYDELDLSGEKSVADKWILTRLNETIEHVTQLADRYEFGEVGRHLYNFIWDDFCDWYIEMAKLPLYGEDEAAKKTTRSILAYVLDQTMRLLHPFMPFLTEEIWQHLPHQGESITVSQWPAVVPEHTDTEAAADMKLLVELIRSVRNIRSEVNTPMSKQVELYIKTSTDEIASRLEANRSYVERFTNPSVLKIGTDIEAVDKAMTAVVSGAEVILPLEGLINIDEEIARLQKEFDKLTKEVERVQKKLGNEGFMKKAPAHVIDEEREKEKDYVAKRDAVQKRMAELKG.

The 'HIGH' region motif lies at 49-59; sequence PNVTGRLHLGH. The short motif at 525–529 is the 'KMSKS' region element; the sequence is KMSKS. An ATP-binding site is contributed by K528. Positions 809–879 form a coiled coil; that stretch reads LEGLINIDEE…AVQKRMAELK (71 aa).

This sequence belongs to the class-I aminoacyl-tRNA synthetase family. ValS type 1 subfamily. As to quaternary structure, monomer.

It is found in the cytoplasm. It catalyses the reaction tRNA(Val) + L-valine + ATP = L-valyl-tRNA(Val) + AMP + diphosphate. In terms of biological role, as ValRS can inadvertently accommodate and process structurally similar amino acids such as threonine, to avoid such errors, it has a 'posttransfer' editing activity that hydrolyzes mischarged Thr-tRNA(Val) in a tRNA-dependent manner. Catalyzes the attachment of valine to tRNA(Val). The chain is Valine--tRNA ligase from Bacillus subtilis (strain 168).